An 827-amino-acid polypeptide reads, in one-letter code: Glycerol-3-phosphate acyltransferase (827 aa).

The HXXXXD motif motif lies at 325 to 330 (CHRSHM).

Belongs to the GPAT/DAPAT family.

Its subcellular location is the cell inner membrane. The catalysed reaction is sn-glycerol 3-phosphate + an acyl-CoA = a 1-acyl-sn-glycero-3-phosphate + CoA. The protein operates within phospholipid metabolism; CDP-diacylglycerol biosynthesis; CDP-diacylglycerol from sn-glycerol 3-phosphate: step 1/3. The sequence is that of Glycerol-3-phosphate acyltransferase from Shigella sonnei (strain Ss046).